Consider the following 143-residue polypeptide: Transcriptional regulator MraZ (143 aa).

SpoVT-AbrB domains are found at residues 5 to 47 and 76 to 119; these read EYHH…PIEE and AMES…SAER.

It belongs to the MraZ family. Forms oligomers.

The protein localises to the cytoplasm. It localises to the nucleoid. The chain is Transcriptional regulator MraZ from Lactobacillus johnsonii (strain CNCM I-12250 / La1 / NCC 533).